The primary structure comprises 479 residues: Variant surface glycoprotein ILTAT 1.22 (479 aa).

Positions 1–12 (MDTAQVFALFYM) are cleaved as a signal peptide. Residues Asn120 and Asn458 are each glycosylated (N-linked (GlcNAc...) asparagine). Asn462 carries the GPI-anchor amidated asparagine lipid modification. Positions 463-479 (NSFAIKTSTLLLAVLLF) are cleaved as a propeptide — removed in mature form.

Its subcellular location is the cell membrane. Functionally, VSG forms a coat on the surface of the parasite. The trypanosome evades the immune response of the host by expressing a series of antigenically distinct VSGs from an estimated 1000 VSG genes. The chain is Variant surface glycoprotein ILTAT 1.22 from Trypanosoma brucei brucei.